The following is a 71-amino-acid chain: Serine palmitoyltransferase small subunit A (71 aa).

The Cytoplasmic portion of the chain corresponds to 1–12 (MAGMALARAWKQ). A helical membrane pass occupies residues 13-29 (MSWFYYQYLLVTALYML). The Lumenal segment spans residues 30–34 (EPWER). A helical membrane pass occupies residues 35–57 (TVFNSMLVSIVGMALYTGYVFMP). Topologically, residues 58–71 (QHIMAILHYFEIVQ) are cytoplasmic.

The protein belongs to the SPTSS family. SPTSSA subfamily. As to quaternary structure, component of the serine palmitoyltransferase (SPT) complex, which is composed of SPTLC1, SPTLC2 or SPTLC3 and SPTSSA or SPTSSB. The heterodimer consisting of SPTLC1 and SPTLC2/SPTLC3 forms the catalytic core of the enzyme, while SPTSSA or SPTSSB subunits determine substrate specificity. SPT also interacts with ORMDL proteins, especially ORMDL3, which negatively regulate SPT activity in the presence of ceramides. Interacts with MBOAT7; the interaction plays a role in MBOAT7 localization to mitochondria-associated membranes.

The protein resides in the endoplasmic reticulum membrane. Its pathway is lipid metabolism; sphingolipid metabolism. Its function is as follows. Component of the serine palmitoyltransferase multisubunit enzyme (SPT) that catalyzes the initial and rate-limiting step in sphingolipid biosynthesis by condensing L-serine and activated acyl-CoA (most commonly palmitoyl-CoA) to form long-chain bases. The SPT complex is composed of SPTLC1, SPTLC2 or SPTLC3 and SPTSSA or SPTSSB. Within this complex, the heterodimer consisting of SPTLC1 and SPTLC2/SPTLC3 forms the catalytic core. Within the SPT complex, SPTSSA stimulates the catalytic activity and plays a role in substrate specificity, which depends upon the overall complex composition. The SPTLC1-SPTLC2-SPTSSA complex shows a strong preference for C16-CoA substrate, while the SPTLC1-SPTLC3-SPTSSA isozyme uses both C14-CoA and C16-CoA as substrates, with a slight preference for C14-CoA. Independently of its action as a SPT component, may be involved in MBOAT7 localization to mitochondria-associated membranes, a membrane bridge between the endoplasmic reticulum and mitochondria, may hence affect MBOAT7-catalyzed incorporation of arachidonic acid into phosphatidylinositol. This is Serine palmitoyltransferase small subunit A from Homo sapiens (Human).